A 236-amino-acid polypeptide reads, in one-letter code: 7-cyano-7-deazaguanine synthase (236 aa).

Residue 7–17 (CSGGLDSVSLA) coordinates ATP. Positions 185, 193, 196, and 199 each coordinate Zn(2+).

The protein belongs to the QueC family. Zn(2+) is required as a cofactor.

The enzyme catalyses 7-carboxy-7-deazaguanine + NH4(+) + ATP = 7-cyano-7-deazaguanine + ADP + phosphate + H2O + H(+). It participates in purine metabolism; 7-cyano-7-deazaguanine biosynthesis. In terms of biological role, catalyzes the ATP-dependent conversion of 7-carboxy-7-deazaguanine (CDG) to 7-cyano-7-deazaguanine (preQ(0)). The sequence is that of 7-cyano-7-deazaguanine synthase from Rhizobium leguminosarum bv. trifolii (strain WSM2304).